The chain runs to 477 residues: Regulatory protein HrpB (477 aa).

The 103-residue stretch at 375–477 folds into the HTH araC/xylS-type domain; that stretch reads RRAYRYIIEN…NEAPSETIWR (103 aa). DNA-binding regions (H-T-H motif) lie at residues 393-414 and 444-467; these read REVAAHINVTERALQLAFKSAV and IIDTASRWGIRSRSALVKGYRKQF.

Its function is as follows. Positive regulation of hypersensitive response genes involved in plant pathogenicity and partly of its own synthesis in minimal medium. The sequence is that of Regulatory protein HrpB (hrpB) from Ralstonia nicotianae (strain ATCC BAA-1114 / GMI1000) (Ralstonia solanacearum).